A 311-amino-acid polypeptide reads, in one-letter code: 4-hydroxy-tetrahydrodipicolinate synthase (311 aa).

Residue T51 participates in pyruvate binding. Residue Y140 is the Proton donor/acceptor of the active site. Catalysis depends on K168, which acts as the Schiff-base intermediate with substrate. I209 provides a ligand contact to pyruvate.

The protein belongs to the DapA family. As to quaternary structure, homotetramer; dimer of dimers.

It localises to the cytoplasm. It catalyses the reaction L-aspartate 4-semialdehyde + pyruvate = (2S,4S)-4-hydroxy-2,3,4,5-tetrahydrodipicolinate + H2O + H(+). Its pathway is amino-acid biosynthesis; L-lysine biosynthesis via DAP pathway; (S)-tetrahydrodipicolinate from L-aspartate: step 3/4. Its function is as follows. Catalyzes the condensation of (S)-aspartate-beta-semialdehyde [(S)-ASA] and pyruvate to 4-hydroxy-tetrahydrodipicolinate (HTPA). In Streptococcus pneumoniae (strain ATCC BAA-255 / R6), this protein is 4-hydroxy-tetrahydrodipicolinate synthase.